A 178-amino-acid chain; its full sequence is Cytidylate kinase (178 aa).

7-15 (GLPGTGTTT) contacts ATP.

Belongs to the cytidylate kinase family. Type 2 subfamily.

The protein resides in the cytoplasm. The catalysed reaction is CMP + ATP = CDP + ADP. It carries out the reaction dCMP + ATP = dCDP + ADP. In Methanococcus maripaludis (strain C5 / ATCC BAA-1333), this protein is Cytidylate kinase.